The primary structure comprises 262 residues: TLC domain-containing protein 4-B (262 aa).

The next 6 membrane-spanning stretches (helical) occupy residues 6–26 (PLTV…FHVG), 53–73 (TVSS…LVYD), 90–110 (LNVA…IYYW), 122–142 (HLAA…PYFG), 177–197 (GVLM…IYYG), and 218–238 (AWII…IKIA). Residues 44-246 (RQKIEWNSRT…IAKGCYKVLY (203 aa)) enclose the TLC domain.

The protein belongs to the TLCD4 family.

The protein resides in the membrane. In Xenopus laevis (African clawed frog), this protein is TLC domain-containing protein 4-B (tlcd4-b).